The chain runs to 713 residues: Topoisomerase subunit TopoM (713 aa).

The Topo IIA-type catalytic domain occupies 41 to 504 (IPSAYDGLKP…DATPVSRGDE (464 aa)). The O-(5'-phospho-DNA)-tyrosine intermediate role is filled by tyrosine 128. The tract at residues 694 to 713 (NRAKASIKGSGADVTPAPAE) is disordered.

Belongs to the type II topoisomerase GyrA/ParC subunit family. A complex of TopoN and TopoM, possibly a heterotetramer. It depends on Mg(2+) as a cofactor.

The enzyme catalyses ATP-dependent breakage, passage and rejoining of double-stranded DNA.. Its activity is regulated as follows. Inhibited by quinolone antibiotic ciprofloxacin and coumarin antibiotic novobiocin, but at much higher concentrations than is usual for DNA gyrase/topoisomerase. Catalyzes the relaxation of negatively supercoiled DNA in the presence of ATP or dATP but not other nucleotides. Individual subunits have no activity. Not able to negatively supercoil DNA, it can however introduce positive supercoils in DNA. Relaxes positive supercoils in an ATP-dependent manner. Catenates and decatenates DNA. Generates dsDNA breaks in the presence of the quinolone antibiotic ciprofloxacin, showing it is a topoisomerase. The chain is Topoisomerase subunit TopoM from Mycolicibacterium smegmatis (strain ATCC 700084 / mc(2)155) (Mycobacterium smegmatis).